A 1038-amino-acid polypeptide reads, in one-letter code: Rap guanine nucleotide exchange factor 1 (1038 aa).

10–140 lines the a nucleoside 3',5'-cyclic phosphate pocket; it reads RLSPLHTFSD…DILTDETPSD (131 aa). Residues 234 to 316 enclose the DEP domain; the sequence is TDNHQVIRDI…KTNSYYRWVQ (83 aa). 375 to 492 lines the a nucleoside 3',5'-cyclic phosphate pocket; sequence ALSHLSTMVK…VRLKDYGEDV (118 aa). The region spanning 516–654 is the N-terminal Ras-GEF domain; that stretch reads CGYSVMAGKA…DILTRIGSIR (139 aa). Residues 795–1028 form the Ras-GEF domain; sequence DSQELAHQLF…MQLSYEIEPK (234 aa).

In terms of assembly, interacts (via C-terminus) with drn-1. Expressed specifically in neurons including the nerve ring, ventral and dorsal nerve cord motor neurons and tail ganglia.

Functionally, guanine nucleotide-releasing protein. Together with GTPase drn-1, may regulate acetylcholine release at the neuromuscular junctions probably downstream of G-protein gsa-1 and adenylate cyclase acy-1. This is Rap guanine nucleotide exchange factor 1 (epac-1) from Caenorhabditis elegans.